A 184-amino-acid polypeptide reads, in one-letter code: Protein DESIGUAL 3 (184 aa).

The signal sequence occupies residues 1–24 (MESELGFLVSVVIICADITATVLG). A compositionally biased stretch (basic residues) spans 34–45 (APHHHHQQHSRH). The disordered stretch occupies residues 34–53 (APHHHHQQHSRHSGSGCRRS). 3 consecutive transmembrane segments (helical) span residues 62–82 (GVAAMVLLFIVHVLANVLGGC), 99–119 (ILAVAFLVLSWIFFVVSYSTL), and 140–160 (FFLIGGIFCLGHGVVTSAYYV). An N-linked (GlcNAc...) asparagine glycan is attached at N180.

Belongs to the DESIGUAL family. In terms of tissue distribution, mainly expressed in roots, inflorescences and developing leaves, and, at low levels, in mature leaves.

The protein localises to the endoplasmic reticulum membrane. Involved, partially redundantly with VCC/DEAL1 and DEAL2, to ensure bilateral symmetry development and early leaf margin patterning, probably via the regulation of auxin and CUC2 distribution. The protein is Protein DESIGUAL 3 of Arabidopsis thaliana (Mouse-ear cress).